The sequence spans 37 residues: Large ribosomal subunit protein bL36c (37 aa).

This sequence belongs to the bacterial ribosomal protein bL36 family.

It localises to the plastid. The protein resides in the chloroplast. This is Large ribosomal subunit protein bL36c from Bigelowiella natans (Pedinomonas minutissima).